An 85-amino-acid polypeptide reads, in one-letter code: UPF0335 protein Atu3758 (85 aa).

This sequence belongs to the UPF0335 family.

This Agrobacterium fabrum (strain C58 / ATCC 33970) (Agrobacterium tumefaciens (strain C58)) protein is UPF0335 protein Atu3758.